Reading from the N-terminus, the 122-residue chain is Large ribosomal subunit protein uL18 (122 aa).

Belongs to the universal ribosomal protein uL18 family. As to quaternary structure, part of the 50S ribosomal subunit; part of the 5S rRNA/L5/L18/L25 subcomplex. Contacts the 5S and 23S rRNAs.

Its function is as follows. This is one of the proteins that bind and probably mediate the attachment of the 5S RNA into the large ribosomal subunit, where it forms part of the central protuberance. The sequence is that of Large ribosomal subunit protein uL18 from Leptospira biflexa serovar Patoc (strain Patoc 1 / Ames).